A 104-amino-acid polypeptide reads, in one-letter code: Small ubiquitin-related modifier 3 (104 aa).

Residues Lys-5 and Lys-7 each participate in a glycyl lysine isopeptide (Lys-Gly) (interchain with G-Cter in SUMO2) cross-link. Residue Lys-11 forms a Glycyl lysine isopeptide (Lys-Gly) (interchain with G-Cter in SUMO); alternate linkage. A Glycyl lysine isopeptide (Lys-Gly) (interchain with G-Cter in SUMO2); alternate cross-link involves residue Lys-11. Residues Asp-15–Gly-92 enclose the Ubiquitin-like domain. Gly-92 is covalently cross-linked (Glycyl lysine isopeptide (Gly-Lys) (interchain with K-? in acceptor proteins)). A propeptide spanning residues Ser-93–Leu-104 is cleaved from the precursor.

It belongs to the ubiquitin family. SUMO subfamily. As to quaternary structure, interacts with SAE2 and UBE2I. Covalently attached to a number of proteins. Interacts with USP25 (via ts SIM domain); the interaction sumoylates USP25 and inhibits its ubiquitin hydrolyzing activity. Interacts with BMAL1. Post-translationally, polymeric chains can be formed through Lys-11 cross-linking. In terms of processing, cleavage of precursor form by SENP1, SENP2 or SENP5 is necessary for function.

It localises to the cytoplasm. Its subcellular location is the nucleus. It is found in the PML body. Ubiquitin-like protein which can be covalently attached to target lysines either as a monomer or as a lysine-linked polymer. Does not seem to be involved in protein degradation and may function as an antagonist of ubiquitin in the degradation process. Plays a role in a number of cellular processes such as nuclear transport, DNA replication and repair, mitosis and signal transduction. Covalent attachment to its substrates requires prior activation by the E1 complex SAE1-SAE2 and linkage to the E2 enzyme UBE2I, and can be promoted by an E3 ligase such as PIAS1-4, RANBP2 or CBX4. Plays a role in the regulation of sumoylation status of SETX. In Bos taurus (Bovine), this protein is Small ubiquitin-related modifier 3 (SUMO3).